Reading from the N-terminus, the 186-residue chain is Nucleoside triphosphate pyrophosphatase (186 aa).

The active-site Proton acceptor is aspartate 68.

It belongs to the Maf family. It depends on a divalent metal cation as a cofactor.

The protein localises to the cytoplasm. The enzyme catalyses a ribonucleoside 5'-triphosphate + H2O = a ribonucleoside 5'-phosphate + diphosphate + H(+). The catalysed reaction is a 2'-deoxyribonucleoside 5'-triphosphate + H2O = a 2'-deoxyribonucleoside 5'-phosphate + diphosphate + H(+). Functionally, nucleoside triphosphate pyrophosphatase. May have a dual role in cell division arrest and in preventing the incorporation of modified nucleotides into cellular nucleic acids. This Prochlorococcus marinus (strain MIT 9303) protein is Nucleoside triphosphate pyrophosphatase.